The following is a 390-amino-acid chain: Succinate--CoA ligase [ADP-forming] subunit beta (390 aa).

An ATP-grasp domain is found at lysine 9–glutamate 244. ATP is bound by residues lysine 46, glycine 53–glycine 55, glutamate 99, alanine 102, and glutamate 107. Residues asparagine 199 and aspartate 213 each coordinate Mg(2+). Substrate contacts are provided by residues asparagine 264 and glycine 321 to valine 323.

Belongs to the succinate/malate CoA ligase beta subunit family. In terms of assembly, heterotetramer of two alpha and two beta subunits. Requires Mg(2+) as cofactor.

It carries out the reaction succinate + ATP + CoA = succinyl-CoA + ADP + phosphate. It catalyses the reaction GTP + succinate + CoA = succinyl-CoA + GDP + phosphate. The protein operates within carbohydrate metabolism; tricarboxylic acid cycle; succinate from succinyl-CoA (ligase route): step 1/1. Its function is as follows. Succinyl-CoA synthetase functions in the citric acid cycle (TCA), coupling the hydrolysis of succinyl-CoA to the synthesis of either ATP or GTP and thus represents the only step of substrate-level phosphorylation in the TCA. The beta subunit provides nucleotide specificity of the enzyme and binds the substrate succinate, while the binding sites for coenzyme A and phosphate are found in the alpha subunit. The protein is Succinate--CoA ligase [ADP-forming] subunit beta of Nitratiruptor sp. (strain SB155-2).